Here is a 75-residue protein sequence, read N- to C-terminus: Small ribosomal subunit protein bS18 (75 aa).

The protein belongs to the bacterial ribosomal protein bS18 family. As to quaternary structure, part of the 30S ribosomal subunit. Forms a tight heterodimer with protein bS6.

Its function is as follows. Binds as a heterodimer with protein bS6 to the central domain of the 16S rRNA, where it helps stabilize the platform of the 30S subunit. The polypeptide is Small ribosomal subunit protein bS18 (Cereibacter sphaeroides (strain ATCC 17029 / ATH 2.4.9) (Rhodobacter sphaeroides)).